A 208-amino-acid polypeptide reads, in one-letter code: MKDPIETYMNLVPMVVEQTSRGERAYDIFSRLLKERIIFLNGPVHDGMSSLIVAQLLHLEAENPAKEISMYINSPGGVVTSGLSIYDTMQYIKPKVSTLVIGQAASMGSLLLTAGEAGMRFSLPNSRVMVHQPSGGYQGQATDIMIHAAETQKLKDRLNEIYVKHTGQTMKKVVDALERDNFMSPEEAKEFGLIDEIVENRSKDDAET.

Residue Ser106 is the Nucleophile of the active site. His131 is a catalytic residue.

This sequence belongs to the peptidase S14 family. As to quaternary structure, fourteen ClpP subunits assemble into 2 heptameric rings which stack back to back to give a disk-like structure with a central cavity, resembling the structure of eukaryotic proteasomes.

Its subcellular location is the cytoplasm. The catalysed reaction is Hydrolysis of proteins to small peptides in the presence of ATP and magnesium. alpha-casein is the usual test substrate. In the absence of ATP, only oligopeptides shorter than five residues are hydrolyzed (such as succinyl-Leu-Tyr-|-NHMec, and Leu-Tyr-Leu-|-Tyr-Trp, in which cleavage of the -Tyr-|-Leu- and -Tyr-|-Trp bonds also occurs).. Cleaves peptides in various proteins in a process that requires ATP hydrolysis. Has a chymotrypsin-like activity. Plays a major role in the degradation of misfolded proteins. The sequence is that of ATP-dependent Clp protease proteolytic subunit from Roseobacter denitrificans (strain ATCC 33942 / OCh 114) (Erythrobacter sp. (strain OCh 114)).